Consider the following 298-residue polypeptide: MTAPLIVICGATATGKSGLALKLAEKLDAVILSADSRQIYKEFDIGTAKPTPAEQQSIPHYLIDICEPTETLTLAEYQAQAQALIAQFHAEQKPVLLVGGTGLYIKAITKGLKIPRVAPQPDLRQQFTDLGQAYSYQLLRQVDPEVCQKIHPNDQVRTLRALEVFYVTGEPISSQQGENSPTYSILEIGLDCAPDHLDQRIRQRTQQMVDQGFVAEVERLGKKYGWDLPLLNTLGYAEFRDYVRGQGTLEEAIANTVLHTRQFAKRQRTWFRANPDIHWLDNTAPDLLEQALNLITQQ.

Residue 10 to 17 (GATATGKS) coordinates ATP. Position 12–17 (12–17 (TATGKS)) interacts with substrate. The interval 35–38 (DSRQ) is interaction with substrate tRNA.

It belongs to the IPP transferase family. Monomer. Mg(2+) serves as cofactor.

The enzyme catalyses adenosine(37) in tRNA + dimethylallyl diphosphate = N(6)-dimethylallyladenosine(37) in tRNA + diphosphate. In terms of biological role, catalyzes the transfer of a dimethylallyl group onto the adenine at position 37 in tRNAs that read codons beginning with uridine, leading to the formation of N6-(dimethylallyl)adenosine (i(6)A). The protein is tRNA dimethylallyltransferase of Picosynechococcus sp. (strain ATCC 27264 / PCC 7002 / PR-6) (Agmenellum quadruplicatum).